A 92-amino-acid chain; its full sequence is UPF0235 protein PF1765 (92 aa).

It belongs to the UPF0235 family.

In Pyrococcus furiosus (strain ATCC 43587 / DSM 3638 / JCM 8422 / Vc1), this protein is UPF0235 protein PF1765.